The primary structure comprises 888 residues: Transmembrane channel-like protein 2 (888 aa).

The tract at residues 1–128 (MSPQLKSLDE…SLGSSVSTGD (128 aa)) is disordered. Over 1 to 228 (MSPQLKSLDE…KIKDIESHFG (228 aa)) the chain is Cytoplasmic. Composition is skewed to basic and acidic residues over residues 7–16 (SLDEEGDKSA), 32–44 (DGHRAQSSRKDPA), and 87–110 (RTSLKEQRASPKKEREALRKEAGK). A compositionally biased stretch (polar residues) spans 117–128 (STSLGSSVSTGD). A helical membrane pass occupies residues 229–266 (SSVASYFIFLRWMYGVNLVLFGLIFGLVIIPEVLMGMP). Residues 267–317 (YGSIPRKTVPRAEEERAMDFSVLWDFEGYIKYSALFYGYYNNQRTIGWLRY) are Extracellular-facing. Residues 318 to 350 (RLPMAYFMVGVSVFGYSLMIVIRSMASNTQGST) traverse the membrane as a helical segment. At 351–406 (SEGDSDSFTFSFKMFTSWDYLIGNSETADNKYVSITTSFKESIVDEQESNKEGNIH) the chain is on the cytoplasmic side. The helical transmembrane segment at 407–437 (LTRFLRVLANFLILCCLCGSGYLIYFVVKRS) threads the bilayer. Residues 438–447 (QEFSKMQNVS) are Extracellular-facing. The helical transmembrane segment at 448-475 (WYERNEVEIVMSLLGMFCPPLFETIAAL) threads the bilayer. Residues 476-479 (ENYH) lie on the Cytoplasmic side of the membrane. The chain crosses the membrane as a helical span at residues 480–514 (PRTGLKWQLGRIFALFLGNLYTFLLALMDDVHLKL). The Extracellular segment spans residues 515–556 (SNEEKIKNITHWTLFNYYNSSGGNESVPRPPPHPADVPRGSC). A helical transmembrane segment spans residues 557-594 (WETAVGIEFMRLTVSDMLVTYLTILVGDFLRACFVRFM). The Cytoplasmic portion of the chain corresponds to 595–613 (NHCWCWDLEAGFPSYAEFD). Residues 614–634 (ISGNVLGLIFNQGMIWMGSFY) form a helical membrane-spanning segment. At 635–637 (APG) the chain is on the extracellular side. A helical membrane pass occupies residues 638-660 (LVGINVLRLLTSMYFQCWAVMSS). Residues 661–674 (NVPHERVFKASRSN) lie on the Cytoplasmic side of the membrane. The chain crosses the membrane as a helical span at residues 675-698 (NFYMGLLLLVLFLSLLPVAYTVMS). Topologically, residues 699–741 (LPPSFDCGPFSGKNRMYDVLHETIENDFPKFLGKIFAFLANPG) are extracellular. Residues 742–775 (LIIPAILLMFLAIYYLNSVSKSLSRANAQLRKKI) form a helical membrane-spanning segment. Residues 776–888 (QALREVEKNH…SGKRTQRPHN (113 aa)) lie on the Cytoplasmic side of the membrane. Positions 813-888 (LTKEEPTSHS…SGKRTQRPHN (76 aa)) are disordered. 2 stretches are compositionally biased toward polar residues: residues 836-851 (PHTSSTEGGASPSTSW) and 866-881 (GQPQSQTYTGRSPSGK).

It belongs to the TMC family. In terms of assembly, forms the MET channel composed of TMC dimer (TMC1 or TMC2), TMIE, TOMT, CIB (CIB2 or CIB3), LHFPL5 and PDH15. The interaction of TMC1 and TMC2 with TOMT is required for the transportation of TMC1/2 into the stereocilia of hair cells. Interacts (via N-terminus) with both isoforms CD1 and CD3 of PCDH15. Can form a heterodimer with TMC1, TMC5 or TMC7. As to expression, inner ear and testis. Expressed in cochlear inner and outer hair cells and vestibular organ hair cells.

Its subcellular location is the cell membrane. It catalyses the reaction Ca(2+)(in) = Ca(2+)(out). Pore-forming subunit of the mechanotransducer (MET) non-selective cation channel complex located at the tips of stereocilia of cochlear hair cells and that mediates sensory transduction in the auditory system. The MET complex is composed of two dimeric pore-forming ion-conducting transmembrane TMC (TMC1 or TMC2) subunits, several auxiliary proteins including LHFPL5, TMIE, CIB2/3 and TOMT, the tip-link PCDH15, and possibly the PIEZO subunits. MET channel is activated by tension in the tip-link extending from the side wall of one stereocilium to the tip of the adjacent shorter stereocilium, where the channel is located. TMC2 MET channel is highly permeable to calcium and likely transports monovalent cations. Also involved in vestibular hair cell transduction current of the mammalian inner ear. The protein is Transmembrane channel-like protein 2 of Mus musculus (Mouse).